A 390-amino-acid polypeptide reads, in one-letter code: Probable splicing factor YJU2B (390 aa).

The interval 354 to 390 (DACKASSSSEEENSIDSCATGKSLVADYSDSDSGSEV) is disordered.

It belongs to the CWC16 family.

It localises to the nucleus. Functionally, may be involved in mRNA splicing. This chain is Probable splicing factor YJU2B (yju2b), found in Danio rerio (Zebrafish).